Here is a 293-residue protein sequence, read N- to C-terminus: Pyridoxal 5'-phosphate synthase subunit PdxS (293 aa).

Aspartate 23 contributes to the D-ribose 5-phosphate binding site. Lysine 80 functions as the Schiff-base intermediate with D-ribose 5-phosphate in the catalytic mechanism. Glycine 152 contacts D-ribose 5-phosphate. D-glyceraldehyde 3-phosphate is bound at residue arginine 164. Residues glycine 213 and 234–235 contribute to the D-ribose 5-phosphate site; that span reads GS.

Belongs to the PdxS/SNZ family. In the presence of PdxT, forms a dodecamer of heterodimers.

It carries out the reaction aldehydo-D-ribose 5-phosphate + D-glyceraldehyde 3-phosphate + L-glutamine = pyridoxal 5'-phosphate + L-glutamate + phosphate + 3 H2O + H(+). The protein operates within cofactor biosynthesis; pyridoxal 5'-phosphate biosynthesis. Catalyzes the formation of pyridoxal 5'-phosphate from ribose 5-phosphate (RBP), glyceraldehyde 3-phosphate (G3P) and ammonia. The ammonia is provided by the PdxT subunit. Can also use ribulose 5-phosphate and dihydroxyacetone phosphate as substrates, resulting from enzyme-catalyzed isomerization of RBP and G3P, respectively. The protein is Pyridoxal 5'-phosphate synthase subunit PdxS of Niallia circulans (Bacillus circulans).